Reading from the N-terminus, the 669-residue chain is Epithelial sodium channel subunit alpha (669 aa).

The interval 1 to 43 (MEGNKLEEQDSSPPQSTPGLMKGNKREEQGLGPEPAAPQQPTA) is disordered. The Cytoplasmic segment spans residues 1–85 (MEGNKLEEQD…CSQHNRMKTA (85 aa)). The span at 33 to 42 (PEPAAPQQPT) shows a compositional bias: low complexity. A helical transmembrane segment spans residues 86–106 (FWAVLWLCTFGMMYWQFGLLF). At 107–562 (GEYFSYPVSL…SQWSLWFGSS (456 aa)) the chain is on the extracellular side. Disulfide bonds link C133–C305, C229–C236, C282–C289, C394–C479, C416–C456, C416–C475, C420–C471, C429–C456, C429–C479, and C431–C445. Residues 175–243 (RSRRDLRGTL…SDCFYQTYSS (69 aa)) form a gating release of inhibition by proteolysis (GRIP); protease-sensitive region that is responsible for the proteolytic activation of the channel region. The helical transmembrane segment at 563-583 (VLSVVEMAELVFDLLVIMFLM) threads the bilayer. The Cytoplasmic portion of the chain corresponds to 584 to 669 (LLRRFRSRYW…SSSTCPLGGP (86 aa)). The disordered stretch occupies residues 620–669 (HPMSLSLSQPGPAPSPALTAPPPAYATLGPRPSPGGSAGASSSTCPLGGP). A compositionally biased stretch (pro residues) spans 630–643 (GPAPSPALTAPPPA). Residues 640 to 644 (PPPAY) carry the PY motif; recruits WW domain-containing proteins and is thereby required for ubiquitination and inhibition of the channel by NEDD4 and NEDD4L motif.

This sequence belongs to the amiloride-sensitive sodium channel (TC 1.A.6) family. SCNN1A subfamily. In terms of assembly, heterotrimer; containing an alpha/SCNN1A, a beta/SCNN1B and a gamma/SCNN1G subunit. Interacts with WWP1 (via WW domains). Interacts with WWP2 (via WW domains); inhibits the channel. Interacts with BPIFA1; the interaction is indirect via SCNN1B and inhibits the proteolytic processing of SCNN1A and SCNN1G and the activation of ENaC. Interacts with the full-length immature form of PCSK9 (pro-PCSK9); inhibits ENaC by promoting its proteasomal degradation. Ubiquitinated. Can be ubiquitinated at multiple sites and undergo monoubiquitination and polyubiquitination. Ubiquitination by NEDD4 or NEDD4L inhibits the ENaC channel through endocytosis, intracellular retention and degradation of its individual subunits. In terms of processing, ENaC is activated through the proteolytic maturation of its subunits. Furin cleaves the SCNN1A subunit, which results in a stepwise increase in the open probability of the channel due to the release of an inhibitory tract. BPIFA1, which is recruited by the SCNN1B subunit, prevents the proteolytic activation of ENaC. Post-translationally, N-glycosylated. In terms of tissue distribution, expressed in the female reproductive tract, from the fimbrial end of the fallopian tube to the endometrium (at protein level). Expressed in kidney (at protein level). In the respiratory tract, expressed in the bronchial epithelium (at protein level). Highly expressed in lung. Detected at intermediate levels in pancreas and liver, and at low levels in heart and placenta. in skin, expressed in keratinocytes, melanocytes and Merkel cells of the epidermal sub-layers, stratum basale, stratum spinosum and stratum granulosum (at protein level). Expressed in the outer root sheath of the hair follicles (at protein level). Detected in both peripheral and central cells of the sebaceous gland (at protein level). Expressed by eccrine sweat glands (at protein level). In skin, also expressed by arrector pili muscle cells and intradermal adipocytes. Isoform 1 and isoform 2 predominate in all tissues. Detected in lung and heart.

It localises to the apical cell membrane. The protein resides in the cell projection. The protein localises to the cilium. It is found in the cytoplasmic granule. Its subcellular location is the cytoplasm. It localises to the cytoplasmic vesicle. The protein resides in the secretory vesicle. The protein localises to the acrosome. It is found in the flagellum. It catalyses the reaction Na(+)(in) = Na(+)(out). Its activity is regulated as follows. Originally identified and characterized by its inhibition by the diuretic drug amiloride. Inhibited by phenamil. Its function is as follows. This is one of the three pore-forming subunits of the heterotrimeric epithelial sodium channel (ENaC), a critical regulator of sodium balance and fluid homeostasis. ENaC operates in epithelial tissues, where it mediates the electrodiffusion of sodium ions from extracellular fluid through the apical membrane of cells, with water following osmotically. It plays a key role in maintaining sodium homeostasis through electrogenic sodium reabsorption in the kidneys. Additionally, ENaC is essential for airway surface liquid homeostasis, which is crucial for proper mucus clearance. Functionally, not functional. This chain is Epithelial sodium channel subunit alpha, found in Homo sapiens (Human).